The sequence spans 228 residues: NAD(P)H-hydrate epimerase (228 aa).

Positions alanine 9 to glutamate 214 constitute a YjeF N-terminal domain. Asparagine 60 to aspartate 64 is a (6S)-NADPHX binding site. The K(+) site is built by asparagine 61 and aspartate 125. (6S)-NADPHX-binding positions include glycine 129–glutamate 135 and aspartate 158. Serine 161 contributes to the K(+) binding site.

The protein belongs to the NnrE/AIBP family. The cofactor is K(+).

It carries out the reaction (6R)-NADHX = (6S)-NADHX. The catalysed reaction is (6R)-NADPHX = (6S)-NADPHX. Catalyzes the epimerization of the S- and R-forms of NAD(P)HX, a damaged form of NAD(P)H that is a result of enzymatic or heat-dependent hydration. This is a prerequisite for the S-specific NAD(P)H-hydrate dehydratase to allow the repair of both epimers of NAD(P)HX. The polypeptide is NAD(P)H-hydrate epimerase (Nematostella vectensis (Starlet sea anemone)).